The chain runs to 342 residues: Ribosomal RNA small subunit methyltransferase C (342 aa).

It belongs to the methyltransferase superfamily. RsmC family. In terms of assembly, monomer.

Its subcellular location is the cytoplasm. It carries out the reaction guanosine(1207) in 16S rRNA + S-adenosyl-L-methionine = N(2)-methylguanosine(1207) in 16S rRNA + S-adenosyl-L-homocysteine + H(+). In terms of biological role, specifically methylates the guanine in position 1207 of 16S rRNA in the 30S particle. The sequence is that of Ribosomal RNA small subunit methyltransferase C from Shewanella loihica (strain ATCC BAA-1088 / PV-4).